Here is a 257-residue protein sequence, read N- to C-terminus: UPF0246 protein Lcho_2652 (257 aa).

Belongs to the UPF0246 family.

The polypeptide is UPF0246 protein Lcho_2652 (Leptothrix cholodnii (strain ATCC 51168 / LMG 8142 / SP-6) (Leptothrix discophora (strain SP-6))).